We begin with the raw amino-acid sequence, 83 residues long: Small ribosomal subunit protein uS19m (83 aa).

This sequence belongs to the universal ribosomal protein uS19 family.

Its subcellular location is the mitochondrion. The chain is Small ribosomal subunit protein uS19m (RPS19) from Tetraselmis subcordiformis (Marine green alga).